Consider the following 464-residue polypeptide: Arabinose-proton symporter (464 aa).

Helical transmembrane passes span 21–43 (GFVILISCAAGLGGLLYGYDTAV), 63–85 (GLVISSIMIGGVVGVGISGFLSD), 92–111 (ILMTAALLFAISAIVSALSQ), 116–138 (LIIARIIGGLGIGMGSSLSVTYI), 150–172 (LSSLYQLFTILGISATYFINLAV), 185–207 (GWRWMLAYGMVPSVIFFLVLLVV), 266–288 (ALVIGILLALFNQVIGMNAITYY), 303–325 (GFVTTCIVGVVEVIFTVIAVLLI), 332–354 (KLMSIGSAFMAIFMILIGTSFYF), 364–386 (VLILGFVAAFCVSVGPITWIMIS), 398–420 (AGIATIFLWGANWAIGQFVPMMI), and 424–446 (GLAYTFWIFAVINILCFLFVVTI).

Belongs to the major facilitator superfamily. Sugar transporter (TC 2.A.1.1) family.

The protein resides in the cell membrane. The catalysed reaction is L-arabinose(in) + H(+)(in) = L-arabinose(out) + H(+)(out). It catalyses the reaction D-galactose(in) + H(+)(in) = D-galactose(out) + H(+)(out). The enzyme catalyses D-xylose(in) + H(+)(in) = D-xylose(out) + H(+)(out). Functionally, uptake of L-arabinose across the cytoplasmic membrane with the concomitant transport of protons into the cell (symport system). In the presence of inducing amounts of L-arabinose, can import both D-galactose and D-xylose. Can also transport the disaccharide alpha-1,5-arabinobiose. This chain is Arabinose-proton symporter (araE), found in Bacillus subtilis (strain 168).